A 183-amino-acid chain; its full sequence is Protein Syd (183 aa).

The protein belongs to the Syd family.

The protein resides in the cell inner membrane. In terms of biological role, interacts with the SecY protein in vivo. May bind preferentially to an uncomplexed state of SecY, thus functioning either as a chelating agent for excess SecY in the cell or as a regulatory factor that negatively controls the translocase function. This is Protein Syd from Yersinia pseudotuberculosis serotype O:1b (strain IP 31758).